The following is a 447-amino-acid chain: Probable rhamnogalacturonase C (447 aa).

The N-terminal stretch at 1–19 is a signal peptide; it reads MQVKLFYTLALWAPILVSA. N-linked (GlcNAc...) asparagine glycans are attached at residues N37 and N65. An intrachain disulfide couples C40 to C66. The active-site Proton donor is D217. Residues C219 and C236 are joined by a disulfide bond. N-linked (GlcNAc...) asparagine glycans are attached at residues N237 and N252. H291 is a catalytic residue. Residue N316 is glycosylated (N-linked (GlcNAc...) asparagine). 2 cysteine pairs are disulfide-bonded: C338-C344 and C366-C375.

This sequence belongs to the glycosyl hydrolase 28 family.

It is found in the secreted. In terms of biological role, pectinolytic enzymes consist of four classes of enzymes: pectine lyase, polygalacturonase, pectin methylesterase and rhamnogalacturonase. Hydrolyzes alpha-D-galacturonopyranosyl-(1,2)-alpha-L-rhamnopyranosyl linkages in the backbone of the hairy regions of pectins. This Aspergillus flavus (strain ATCC 200026 / FGSC A1120 / IAM 13836 / NRRL 3357 / JCM 12722 / SRRC 167) protein is Probable rhamnogalacturonase C (rhgC).